The following is a 391-amino-acid chain: MEPLRVLELYSGIGGMHHALRESRVPAHVVAAIDVSTVANEVYKHNFPHTHLLAKTIEGISLEEFDKLSFNMILMSPPCQPFTRIGLQGDMSDRRTNSFLYILDILPRLQKLPKYILLENVKGFEVSSTRGLLIQTMEACGFQYQEFLLSPSSLGIPNSRLRYFLIAKLQSEPLCFQAPGQILMEFPNSGTVQPQEYAVVEEGKLRVRTREPDVCLDSSSTQCSGQDSILFKHETAADIDRKRQQDSDLSVQMLKGFLEDGDTAQYLLPAKSLLRYALLLDIVKPTSRRSMCFTKGYGSYIEGTGSVLQTAEDVQIENIYKSLPDLPPEEKIAKLSMLKLRYFTPKEIANLLGFPPEFGFPEKTTVKQRYRLLGNSLNVHVVSKLLTVLCE.

The SAM-dependent MTase C5-type domain maps to 4–391 (LRVLELYSGI…VSKLLTVLCE (388 aa)). S-adenosyl-L-methionine contacts are provided by residues 13 to 15 (IGG), Asp34, 57 to 58 (IE), and Ser76. Cys79 is an active-site residue. Ser376 lines the S-adenosyl-L-methionine pocket.

It belongs to the class I-like SAM-binding methyltransferase superfamily. C5-methyltransferase family.

It localises to the cytoplasm. It catalyses the reaction cytidine(38) in tRNA + S-adenosyl-L-methionine = 5-methylcytidine(38) in tRNA + S-adenosyl-L-homocysteine + H(+). Its function is as follows. Specifically methylates cytosine 38 in the anticodon loop of tRNA(Asp). Has higher activity on tRNA(Asp) modified with queuosine at position 34. The protein is tRNA (cytosine(38)-C(5))-methyltransferase (Trdmt1) of Rattus norvegicus (Rat).